The sequence spans 554 residues: Hydroxylamine reductase (554 aa).

The [2Fe-2S] cluster site is built by cysteine 3, cysteine 6, cysteine 18, and cysteine 25. Residues histidine 252, glutamate 276, cysteine 320, cysteine 408, cysteine 436, cysteine 461, glutamate 495, and lysine 497 each coordinate hybrid [4Fe-2O-2S] cluster. Position 408 is a cysteine persulfide (cysteine 408).

This sequence belongs to the HCP family. [2Fe-2S] cluster is required as a cofactor. The cofactor is hybrid [4Fe-2O-2S] cluster.

It is found in the cytoplasm. The catalysed reaction is A + NH4(+) + H2O = hydroxylamine + AH2 + H(+). Catalyzes the reduction of hydroxylamine to form NH(3) and H(2)O. In Shewanella baltica (strain OS185), this protein is Hydroxylamine reductase.